We begin with the raw amino-acid sequence, 110 residues long: Large ribosomal subunit protein uL22 (110 aa).

Belongs to the universal ribosomal protein uL22 family. In terms of assembly, part of the 50S ribosomal subunit.

Its function is as follows. This protein binds specifically to 23S rRNA; its binding is stimulated by other ribosomal proteins, e.g. L4, L17, and L20. It is important during the early stages of 50S assembly. It makes multiple contacts with different domains of the 23S rRNA in the assembled 50S subunit and ribosome. Functionally, the globular domain of the protein is located near the polypeptide exit tunnel on the outside of the subunit, while an extended beta-hairpin is found that lines the wall of the exit tunnel in the center of the 70S ribosome. The chain is Large ribosomal subunit protein uL22 from Acinetobacter baylyi (strain ATCC 33305 / BD413 / ADP1).